The sequence spans 163 residues: Cytochrome c-type biogenesis protein CcmE (163 aa).

At 1–8 the chain is on the cytoplasmic side; the sequence is MNPRRKKR. Residues 9–29 form a helical; Signal-anchor for type II membrane protein membrane-spanning segment; sequence LTIILAISAGLAAVIGLVLYA. Residues 30-163 are Periplasmic-facing; it reads LSQNIDLFYT…TEAQLKGAKQ (134 aa). His131 and Tyr135 together coordinate heme.

It belongs to the CcmE/CycJ family.

The protein resides in the cell inner membrane. In terms of biological role, heme chaperone required for the biogenesis of c-type cytochromes. Transiently binds heme delivered by CcmC and transfers the heme to apo-cytochromes in a process facilitated by CcmF and CcmH. The protein is Cytochrome c-type biogenesis protein CcmE of Aeromonas salmonicida (strain A449).